The sequence spans 266 residues: Putative carbamate hydrolase RutD (266 aa).

Positions 15-239 (PVVVLSAGLG…RVEMPWGGHA (225 aa)) constitute an AB hydrolase-1 domain.

The protein belongs to the AB hydrolase superfamily. Hydrolase RutD family.

The enzyme catalyses carbamate + 2 H(+) = NH4(+) + CO2. In terms of biological role, involved in pyrimidine catabolism. May facilitate the hydrolysis of carbamate, a reaction that can also occur spontaneously. In Klebsiella variicola (strain At-22), this protein is Putative carbamate hydrolase RutD.